The chain runs to 485 residues: Zinc finger protein 639 (485 aa).

Residues 1–14 show a composition bias toward basic residues; that stretch reads MNEYPKKRKRKTLH. A disordered region spans residues 1 to 20; that stretch reads MNEYPKKRKRKTLHPSRYSD. A Phosphoserine modification is found at serine 60. Lysine 76 is covalently cross-linked (Glycyl lysine isopeptide (Lys-Gly) (interchain with G-Cter in SUMO2)). A Phosphoserine modification is found at serine 88. Glycyl lysine isopeptide (Lys-Gly) (interchain with G-Cter in SUMO2) cross-links involve residues lysine 177, lysine 181, and lysine 226. C2H2-type zinc fingers lie at residues 204-227, 233-255, 260-283, 289-311, 374-397, 403-425, 431-454, and 460-482; these read YKCE…ILKH, NVCR…AKLH, YICK…ADTH, YWCE…FQEH, FVCQ…AIEH, HVCD…LNSH, YLCQ…DFKH, and HKCS…LPVH. Residues 371-455 form an interaction with CTNNA2 region; that stretch reads KNFFVCQVCG…LKIHLDFKHS (85 aa).

This sequence belongs to the krueppel C2H2-type zinc-finger protein family. Interacts with CTNNA2.

It localises to the nucleus. Functionally, binds DNA and may function as a transcriptional repressor. This Bos taurus (Bovine) protein is Zinc finger protein 639 (ZNF639).